We begin with the raw amino-acid sequence, 168 residues long: ATP synthase F(1) complex subunit delta, mitochondrial (168 aa).

The N-terminal 22 residues, 1 to 22 (MLPASLLRHPGLRRLMLQARTY), are a transit peptide targeting the mitochondrion. 2 positions are modified to N6-acetyllysine; alternate: lysine 136 and lysine 165. 2 positions are modified to N6-succinyllysine; alternate: lysine 136 and lysine 165.

This sequence belongs to the ATPase epsilon chain family. Component of the ATP synthase complex composed at least of ATP5F1A/subunit alpha, ATP5F1B/subunit beta, ATP5MC1/subunit c (homooctomer), MT-ATP6/subunit a, MT-ATP8/subunit 8, ATP5ME/subunit e, ATP5MF/subunit f, ATP5MG/subunit g, ATP5MK/subunit k, ATP5MJ/subunit j, ATP5F1C/subunit gamma, ATP5F1D/subunit delta, ATP5F1E/subunit epsilon, ATP5PF/subunit F6, ATP5PB/subunit b, ATP5PD/subunit d, ATP5PO/subunit OSCP. ATP synthase complex consists of a soluble F(1) head domain (subunits alpha(3) and beta(3)) - the catalytic core - and a membrane F(0) domain - the membrane proton channel (subunits c, a, 8, e, f, g, k and j). These two domains are linked by a central stalk (subunits gamma, delta, and epsilon) rotating inside the F1 region and a stationary peripheral stalk (subunits F6, b, d, and OSCP). Component of a complex composed at least by ATPIF1, ATP5F1A, ATP5F1B, ATP5F1C AND ATP5F1E.

Its subcellular location is the mitochondrion. It is found in the mitochondrion inner membrane. Functionally, subunit delta, of the mitochondrial membrane ATP synthase complex (F(1)F(0) ATP synthase or Complex V) that produces ATP from ADP in the presence of a proton gradient across the membrane which is generated by electron transport complexes of the respiratory chain. ATP synthase complex consist of a soluble F(1) head domain - the catalytic core - and a membrane F(1) domain - the membrane proton channel. These two domains are linked by a central stalk rotating inside the F(1) region and a stationary peripheral stalk. During catalysis, ATP synthesis in the catalytic domain of F(1) is coupled via a rotary mechanism of the central stalk subunits to proton translocation. In vivo, can only synthesize ATP although its ATP hydrolase activity can be activated artificially in vitro. With the central stalk subunit gamma, is essential for the biogenesis of F(1) catalytic part of the ATP synthase complex namely in the formation of F1 assembly intermediate. The chain is ATP synthase F(1) complex subunit delta, mitochondrial from Mus musculus (Mouse).